The primary structure comprises 192 residues: Ion-translocating oxidoreductase complex subunit A (192 aa).

6 helical membrane passes run 5–25 (LLLL…FLGL), 39–59 (IGMS…SYLV), 72–92 (LRTM…EMLV), 102–122 (ALGI…VALL), 134–154 (AIYG…FSAM), and 171–191 (AIAM…TGLV).

The protein belongs to the NqrDE/RnfAE family. As to quaternary structure, the complex is composed of six subunits: RnfA, RnfB, RnfC, RnfD, RnfE and RnfG.

The protein localises to the cell inner membrane. Part of a membrane-bound complex that couples electron transfer with translocation of ions across the membrane. This Shewanella loihica (strain ATCC BAA-1088 / PV-4) protein is Ion-translocating oxidoreductase complex subunit A.